We begin with the raw amino-acid sequence, 415 residues long: Phosphopentomutase (415 aa).

Mn(2+)-binding residues include D10, D313, H318, D354, H355, and H366.

This sequence belongs to the phosphopentomutase family. Requires Mn(2+) as cofactor.

The protein resides in the cytoplasm. It catalyses the reaction 2-deoxy-alpha-D-ribose 1-phosphate = 2-deoxy-D-ribose 5-phosphate. The enzyme catalyses alpha-D-ribose 1-phosphate = D-ribose 5-phosphate. It functions in the pathway carbohydrate degradation; 2-deoxy-D-ribose 1-phosphate degradation; D-glyceraldehyde 3-phosphate and acetaldehyde from 2-deoxy-alpha-D-ribose 1-phosphate: step 1/2. In terms of biological role, isomerase that catalyzes the conversion of deoxy-ribose 1-phosphate (dRib-1-P) and ribose 1-phosphate (Rib-1-P) to deoxy-ribose 5-phosphate (dRib-5-P) and ribose 5-phosphate (Rib-5-P), respectively. In Psychromonas ingrahamii (strain DSM 17664 / CCUG 51855 / 37), this protein is Phosphopentomutase.